A 256-amino-acid chain; its full sequence is uncharacterized protein (256 aa).

An HTH deoR-type domain is found at 7 to 62 (PAERQKTLLNLISKQSVISINNLVNILGVSHMTVRRDIQKLEEDGKVISVSGGVQL). The H-T-H motif DNA-binding region spans 24-43 (ISINNLVNILGVSHMTVRRD).

This is an uncharacterized protein from Haemophilus influenzae (strain ATCC 51907 / DSM 11121 / KW20 / Rd).